The following is a 152-amino-acid chain: S-ribosylhomocysteine lyase (152 aa).

Fe cation contacts are provided by H53, H57, and C120.

It belongs to the LuxS family. Homodimer. The cofactor is Fe cation.

It catalyses the reaction S-(5-deoxy-D-ribos-5-yl)-L-homocysteine = (S)-4,5-dihydroxypentane-2,3-dione + L-homocysteine. Involved in the synthesis of autoinducer 2 (AI-2) which is secreted by bacteria and is used to communicate both the cell density and the metabolic potential of the environment. The regulation of gene expression in response to changes in cell density is called quorum sensing. Catalyzes the transformation of S-ribosylhomocysteine (RHC) to homocysteine (HC) and 4,5-dihydroxy-2,3-pentadione (DPD). The sequence is that of S-ribosylhomocysteine lyase from Enterococcus faecalis (strain ATCC 700802 / V583).